The primary structure comprises 349 residues: MGDMGDPPKKKRLISLCVGCGNQIHDQYILRVSPDLEWHAACLKCAECNQYLDETCTCFVRDGKTYCKRDYIRLYGIKCAKCSIGFSKNDFVMRARAKVYHIECFRCVACSRQLIPGDEFALREDGLFCRADHDVVERASLGAGDPLSPLHPARPLQMAAEPISARQPALRPHVHKQPEKTTRVRTVLNEKQLHTLRTCYAANPRPDALMKEQLVEMTGLSPRVIRVWFQNKRCKDKKRSIMMKQLQQQQPNDKTNIQGMTGTPMVAASPERHDGGLQANPVEVQSYQPPWKVLSDFALQSDIDQPAFQQLVNFSEGGPGSNSTGSEVASMSSQLPDTPNSMVASPIEA.

LIM zinc-binding domains are found at residues 17 to 70 (CVGC…CKRD) and 79 to 133 (CAKC…RADH). Positions 181–240 (TTRVRTVLNEKQLHTLRTCYAANPRPDALMKEQLVEMTGLSPRVIRVWFQNKRCKDKKRS) form a DNA-binding region, homeobox. A disordered region spans residues 312–349 (VNFSEGGPGSNSTGSEVASMSSQLPDTPNSMVASPIEA). Over residues 321–343 (SNSTGSEVASMSSQLPDTPNSMV) the composition is skewed to polar residues.

Its subcellular location is the nucleus. In terms of biological role, acts as a transcriptional regulator. Recognizes and binds to the consensus octamer binding site 5'-ATAATTAA-3' in promoter of target genes. Plays a fundamental role in the gene regulatory network essential for retinal ganglion cell (RGC) differentiation. Binds to insulin gene enhancer sequences. Defines subclasses of motoneurons that segregate into columns in the spinal cord and select distinct axon pathways. Acts in conjunction with LHX1, LHX3 and ISL2. Binds to insulin gene enhancer sequences. Essential for heart development. The polypeptide is Insulin gene enhancer protein ISL-1 (ISL1) (Gallus gallus (Chicken)).